The chain runs to 289 residues: Glycine--tRNA ligase alpha subunit (289 aa).

Belongs to the class-II aminoacyl-tRNA synthetase family. Tetramer of two alpha and two beta subunits.

The protein resides in the cytoplasm. It catalyses the reaction tRNA(Gly) + glycine + ATP = glycyl-tRNA(Gly) + AMP + diphosphate. In Rickettsia akari (strain Hartford), this protein is Glycine--tRNA ligase alpha subunit.